We begin with the raw amino-acid sequence, 479 residues long: Ribulose bisphosphate carboxylase large chain (479 aa).

The propeptide occupies 1–2 (MS). Substrate-binding residues include N123 and T173. K175 serves as the catalytic Proton acceptor. Substrate is bound at residue K177. The Mg(2+) site is built by K201, D203, and E204. An N6-carboxylysine modification is found at K201. At S208 the chain carries Phosphoserine. H294 serves as the catalytic Proton acceptor. Substrate is bound by residues R295 and H327. T330 carries the phosphothreonine modification. Position 379 (S379) interacts with substrate.

This sequence belongs to the RuBisCO large chain family. Type I subfamily. Heterohexadecamer of 8 large chains and 8 small chains; disulfide-linked. The disulfide link is formed within the large subunit homodimers. Mg(2+) serves as cofactor. Post-translationally, the disulfide bond which can form in the large chain dimeric partners within the hexadecamer appears to be associated with oxidative stress and protein turnover.

The protein resides in the plastid. The protein localises to the chloroplast. The catalysed reaction is 2 (2R)-3-phosphoglycerate + 2 H(+) = D-ribulose 1,5-bisphosphate + CO2 + H2O. It catalyses the reaction D-ribulose 1,5-bisphosphate + O2 = 2-phosphoglycolate + (2R)-3-phosphoglycerate + 2 H(+). Functionally, ruBisCO catalyzes two reactions: the carboxylation of D-ribulose 1,5-bisphosphate, the primary event in carbon dioxide fixation, as well as the oxidative fragmentation of the pentose substrate in the photorespiration process. Both reactions occur simultaneously and in competition at the same active site. The polypeptide is Ribulose bisphosphate carboxylase large chain (Nasturtium officinale (Watercress)).